A 425-amino-acid polypeptide reads, in one-letter code: UDP-N-acetylglucosamine 1-carboxyvinyltransferase (425 aa).

24–25 (KN) is a binding site for phosphoenolpyruvate. Arg95 serves as a coordination point for UDP-N-acetyl-alpha-D-glucosamine. Cys119 functions as the Proton donor in the catalytic mechanism. Cys119 carries the post-translational modification 2-(S-cysteinyl)pyruvic acid O-phosphothioketal. Residues 124 to 128 (RPVDQ), Asp308, and Val330 each bind UDP-N-acetyl-alpha-D-glucosamine.

Belongs to the EPSP synthase family. MurA subfamily.

Its subcellular location is the cytoplasm. It carries out the reaction phosphoenolpyruvate + UDP-N-acetyl-alpha-D-glucosamine = UDP-N-acetyl-3-O-(1-carboxyvinyl)-alpha-D-glucosamine + phosphate. Its pathway is cell wall biogenesis; peptidoglycan biosynthesis. Its function is as follows. Cell wall formation. Adds enolpyruvyl to UDP-N-acetylglucosamine. In Deinococcus deserti (strain DSM 17065 / CIP 109153 / LMG 22923 / VCD115), this protein is UDP-N-acetylglucosamine 1-carboxyvinyltransferase.